Consider the following 107-residue polypeptide: MVRRTLLQAALRAWVIQCWWRSMQAKMLEQRRRLALRLYTCQEWAVVKVQAQVRMWQARRRFLQARQAACIIQSHWRWHASQTRGLIRGHYEVRASRLELDIEILMT.

In terms of domain architecture, IQ spans 42–71 (QEWAVVKVQAQVRMWQARRRFLQARQAACI).

The protein is IQ domain-containing protein F6 (IQCF6) of Homo sapiens (Human).